The chain runs to 294 residues: Nucleotide-binding protein Swol_0262 (294 aa).

15–22 (GLSGAGKT) contacts ATP. Residue 65–68 (DVRG) participates in GTP binding.

It belongs to the RapZ-like family.

Functionally, displays ATPase and GTPase activities. This is Nucleotide-binding protein Swol_0262 from Syntrophomonas wolfei subsp. wolfei (strain DSM 2245B / Goettingen).